We begin with the raw amino-acid sequence, 365 residues long: Aminomethyltransferase (365 aa).

It belongs to the GcvT family. In terms of assembly, the glycine cleavage system is composed of four proteins: P, T, L and H.

The catalysed reaction is N(6)-[(R)-S(8)-aminomethyldihydrolipoyl]-L-lysyl-[protein] + (6S)-5,6,7,8-tetrahydrofolate = N(6)-[(R)-dihydrolipoyl]-L-lysyl-[protein] + (6R)-5,10-methylene-5,6,7,8-tetrahydrofolate + NH4(+). The glycine cleavage system catalyzes the degradation of glycine. This is Aminomethyltransferase from Aeromonas salmonicida (strain A449).